The primary structure comprises 355 residues: S-adenosylmethionine:tRNA ribosyltransferase-isomerase (355 aa).

This sequence belongs to the QueA family. As to quaternary structure, monomer.

The protein localises to the cytoplasm. The enzyme catalyses 7-aminomethyl-7-carbaguanosine(34) in tRNA + S-adenosyl-L-methionine = epoxyqueuosine(34) in tRNA + adenine + L-methionine + 2 H(+). The protein operates within tRNA modification; tRNA-queuosine biosynthesis. Its function is as follows. Transfers and isomerizes the ribose moiety from AdoMet to the 7-aminomethyl group of 7-deazaguanine (preQ1-tRNA) to give epoxyqueuosine (oQ-tRNA). The polypeptide is S-adenosylmethionine:tRNA ribosyltransferase-isomerase (Pectobacterium atrosepticum (strain SCRI 1043 / ATCC BAA-672) (Erwinia carotovora subsp. atroseptica)).